The primary structure comprises 428 residues: Elongation factor 1-alpha (428 aa).

The tr-type G domain maps to 5-215 (KPHVNIVFIG…ALDQIPEPPK (211 aa)). The tract at residues 14 to 21 (GHVDHGKS) is G1. 14-21 (GHVDHGKS) is a binding site for GTP. Ser21 serves as a coordination point for Mg(2+). The interval 68-72 (GITID) is G2. The G3 stretch occupies residues 89-92 (DAPG). GTP is bound by residues 89–93 (DAPGH) and 144–147 (NKMD). A G4 region spans residues 144-147 (NKMD). Residues 181–183 (SAW) are G5.

It belongs to the TRAFAC class translation factor GTPase superfamily. Classic translation factor GTPase family. EF-Tu/EF-1A subfamily.

It localises to the cytoplasm. It carries out the reaction GTP + H2O = GDP + phosphate + H(+). GTP hydrolase that promotes the GTP-dependent binding of aminoacyl-tRNA to the A-site of ribosomes during protein biosynthesis. The protein is Elongation factor 1-alpha of Thermococcus gammatolerans (strain DSM 15229 / JCM 11827 / EJ3).